The primary structure comprises 510 residues: Histidine ammonia-lyase (510 aa).

The 5-imidazolinone (Ala-Gly) cross-link spans 143–145; sequence ASG. The residue at position 144 (S144) is a 2,3-didehydroalanine (Ser).

It belongs to the PAL/histidase family. Contains an active site 4-methylidene-imidazol-5-one (MIO), which is formed autocatalytically by cyclization and dehydration of residues Ala-Ser-Gly.

The protein resides in the cytoplasm. It carries out the reaction L-histidine = trans-urocanate + NH4(+). It functions in the pathway amino-acid degradation; L-histidine degradation into L-glutamate; N-formimidoyl-L-glutamate from L-histidine: step 1/3. This chain is Histidine ammonia-lyase, found in Aliivibrio fischeri (strain MJ11) (Vibrio fischeri).